A 500-amino-acid polypeptide reads, in one-letter code: Probable cytosol aminopeptidase (500 aa).

2 residues coordinate Mn(2+): lysine 269 and aspartate 274. Residue lysine 281 is part of the active site. Mn(2+)-binding residues include aspartate 292, aspartate 351, and glutamate 353. Arginine 355 is an active-site residue.

The protein belongs to the peptidase M17 family. The cofactor is Mn(2+).

It is found in the cytoplasm. It carries out the reaction Release of an N-terminal amino acid, Xaa-|-Yaa-, in which Xaa is preferably Leu, but may be other amino acids including Pro although not Arg or Lys, and Yaa may be Pro. Amino acid amides and methyl esters are also readily hydrolyzed, but rates on arylamides are exceedingly low.. The enzyme catalyses Release of an N-terminal amino acid, preferentially leucine, but not glutamic or aspartic acids.. Its function is as follows. Presumably involved in the processing and regular turnover of intracellular proteins. Catalyzes the removal of unsubstituted N-terminal amino acids from various peptides. This Acidithiobacillus ferrooxidans (strain ATCC 23270 / DSM 14882 / CIP 104768 / NCIMB 8455) (Ferrobacillus ferrooxidans (strain ATCC 23270)) protein is Probable cytosol aminopeptidase.